We begin with the raw amino-acid sequence, 91 residues long: Ice-structuring protein 2A7 (91 aa).

The N-terminal stretch at 1–21 (MALSLFTVGQLIFLFWTMRIT) is a signal peptide. The propeptide at 22-39 (EANPDPAAKAVPAAAAPD) is removed by a dipeptidylpeptidase.

The protein belongs to the type-I AFP family. As to expression, detected in blood serum (at protein level).

The protein resides in the secreted. Contributes to protect fish blood from freezing at subzero sea water temperatures. Lowers the blood freezing point. Binds to nascent ice crystals and prevents further growth. The polypeptide is Ice-structuring protein 2A7 (Pseudopleuronectes americanus (Winter flounder)).